The primary structure comprises 295 residues: Light-independent protochlorophyllide reductase iron-sulfur ATP-binding protein (295 aa).

Residues 39–44 (GIGKST) and K68 contribute to the ATP site. Mg(2+) is bound at residue S43. [4Fe-4S] cluster-binding residues include C124 and C158. ATP contacts are provided by residues 209 to 210 (NR) and 233 to 235 (PDL).

Belongs to the NifH/BchL/ChlL family. As to quaternary structure, homodimer. Protochlorophyllide reductase is composed of three subunits; BchL, BchN and BchB. Requires [4Fe-4S] cluster as cofactor.

The catalysed reaction is chlorophyllide a + oxidized 2[4Fe-4S]-[ferredoxin] + 2 ADP + 2 phosphate = protochlorophyllide a + reduced 2[4Fe-4S]-[ferredoxin] + 2 ATP + 2 H2O. It functions in the pathway porphyrin-containing compound metabolism; bacteriochlorophyll biosynthesis (light-independent). Its function is as follows. Component of the dark-operative protochlorophyllide reductase (DPOR) that uses Mg-ATP and reduced ferredoxin to reduce ring D of protochlorophyllide (Pchlide) to form chlorophyllide a (Chlide). This reaction is light-independent. The L component serves as a unique electron donor to the NB-component of the complex, and binds Mg-ATP. The sequence is that of Light-independent protochlorophyllide reductase iron-sulfur ATP-binding protein from Rhodospirillum rubrum (strain ATCC 11170 / ATH 1.1.1 / DSM 467 / LMG 4362 / NCIMB 8255 / S1).